We begin with the raw amino-acid sequence, 113 residues long: MIGIDIVSISRIDEMINKFGEKALKRFLNESEILLTKSSQNAAGFWAAKEAFSKALGTGIGSECSFLDIEISKDQKGKPFFTTKTLNKFNIKQADLSISHDGGFAIAAVILLK.

Residues D5 and E50 each coordinate Mg(2+).

The protein belongs to the P-Pant transferase superfamily. AcpS family. The cofactor is Mg(2+).

Its subcellular location is the cytoplasm. It carries out the reaction apo-[ACP] + CoA = holo-[ACP] + adenosine 3',5'-bisphosphate + H(+). In terms of biological role, transfers the 4'-phosphopantetheine moiety from coenzyme A to a Ser of acyl-carrier-protein. In Nautilia profundicola (strain ATCC BAA-1463 / DSM 18972 / AmH), this protein is Holo-[acyl-carrier-protein] synthase.